The chain runs to 208 residues: Interleukin-6 (208 aa).

Residues 1 to 29 form the signal peptide; that stretch reads MNSRFTSAFTPFAVSLGLLLVMTSAFPTP. Asn38 carries an N-linked (GlcNAc...) asparagine glycan. Cys72 and Cys78 are disulfide-bonded. The residue at position 81 (Ser81) is a Phosphoserine. A disulfide bridge connects residues Cys101 and Cys111.

It belongs to the IL-6 superfamily. Component of a hexamer of two molecules each of IL6, IL6R and IL6ST; first binds to IL6R to associate with the signaling subunit IL6ST. Interacts with IL6R (via the N-terminal ectodomain); this interaction may be affected by IL6R-binding with SORL1, hence decreasing IL6 cis signaling. Interacts with SORL1 (via the N-terminal ectodomain); this interaction leads to IL6 internalization and lysosomal degradation. May form a trimeric complex with the soluble SORL1 ectodomain and soluble IL6R receptor; this interaction might stabilize circulating IL6, hence promoting IL6 trans signaling.

It localises to the secreted. Functionally, cytokine with a wide variety of biological functions in immunity, tissue regeneration, and metabolism. Binds to IL6R, then the complex associates to the signaling subunit IL6ST/gp130 to trigger the intracellular IL6-signaling pathway. The interaction with the membrane-bound IL6R and IL6ST stimulates 'classic signaling', whereas the binding of IL6 and soluble IL6R to IL6ST stimulates 'trans-signaling'. Alternatively, 'cluster signaling' occurs when membrane-bound IL6:IL6R complexes on transmitter cells activate IL6ST receptors on neighboring receiver cells. In terms of biological role, IL6 is a potent inducer of the acute phase response. Rapid production of IL6 contributes to host defense during infection and tissue injury, but excessive IL6 synthesis is involved in disease pathology. In the innate immune response, is synthesized by myeloid cells, such as macrophages and dendritic cells, upon recognition of pathogens through toll-like receptors (TLRs) at the site of infection or tissue injury. In the adaptive immune response, is required for the differentiation of B cells into immunoglobulin-secreting cells. Plays a major role in the differentiation of CD4(+) T cell subsets. Essential factor for the development of T follicular helper (Tfh) cells that are required for the induction of germinal-center formation. Required to drive naive CD4(+) T cells to the Th17 lineage. Also required for proliferation of myeloma cells and the survival of plasmablast cells. Its function is as follows. Acts as an essential factor in bone homeostasis and on vessels directly or indirectly by induction of VEGF, resulting in increased angiogenesis activity and vascular permeability. Induces, through 'trans-signaling' and synergistically with IL1B and TNF, the production of VEGF. Involved in metabolic controls, is discharged into the bloodstream after muscle contraction increasing lipolysis and improving insulin resistance. 'Trans-signaling' in central nervous system also regulates energy and glucose homeostasis. Mediates, through GLP-1, crosstalk between insulin-sensitive tissues, intestinal L cells and pancreatic islets to adapt to changes in insulin demand. Also acts as a myokine. Plays a protective role during liver injury, being required for maintenance of tissue regeneration. Also has a pivotal role in iron metabolism by regulating HAMP/hepcidin expression upon inflammation or bacterial infection. Through activation of IL6ST-YAP-NOTCH pathway, induces inflammation-induced epithelial regeneration. This chain is Interleukin-6 (IL6), found in Bos taurus (Bovine).